Consider the following 396-residue polypeptide: S-adenosylmethionine synthase (396 aa).

Position 16 (His16) interacts with ATP. Residue Asp18 participates in Mg(2+) binding. K(+) is bound at residue Glu44. 2 residues coordinate L-methionine: Glu57 and Gln100. The flexible loop stretch occupies residues 100-110; the sequence is QSVDIAQGVDR. ATP-binding positions include 165-167, Asp240, 246-247, Ala263, and Lys267; these read DAK and RK. Asp240 is a binding site for L-methionine. Lys271 contributes to the L-methionine binding site.

This sequence belongs to the AdoMet synthase family. In terms of assembly, homotetramer; dimer of dimers. Mg(2+) is required as a cofactor. Requires K(+) as cofactor.

It localises to the cytoplasm. It catalyses the reaction L-methionine + ATP + H2O = S-adenosyl-L-methionine + phosphate + diphosphate. It functions in the pathway amino-acid biosynthesis; S-adenosyl-L-methionine biosynthesis; S-adenosyl-L-methionine from L-methionine: step 1/1. Functionally, catalyzes the formation of S-adenosylmethionine (AdoMet) from methionine and ATP. The overall synthetic reaction is composed of two sequential steps, AdoMet formation and the subsequent tripolyphosphate hydrolysis which occurs prior to release of AdoMet from the enzyme. The chain is S-adenosylmethionine synthase from Pseudomonas putida (strain ATCC 700007 / DSM 6899 / JCM 31910 / BCRC 17059 / LMG 24140 / F1).